Reading from the N-terminus, the 725-residue chain is Calcium-responsive transcription factor (725 aa).

The interval 572–592 (TSPDESPAVVSVNNQPSSSPS) is disordered. Over residues 577 to 592 (SPAVVSVNNQPSSSPS) the composition is skewed to low complexity.

Its subcellular location is the nucleus. Its function is as follows. Acts as a transcriptional activator that mediates the calcium- and neuron-selective induction of BDNF exon III transcription. Binds to the consensus calcium-response element CaRE1 5'-CTATTTCGAG-3' sequence. This is Calcium-responsive transcription factor (CARF) from Homo sapiens (Human).